Here is a 549-residue protein sequence, read N- to C-terminus: Cytoplasmic trehalase (549 aa).

Residues Arg168, 175 to 176 (WD), Asn212, 221 to 223 (RSQ), 292 to 294 (RDE), and Gly324 each bind substrate. Residues Asp326 and Glu509 each act as proton donor/acceptor in the active site. Glu525 is a binding site for substrate.

It belongs to the glycosyl hydrolase 37 family. In terms of assembly, monomer.

Its subcellular location is the cytoplasm. It catalyses the reaction alpha,alpha-trehalose + H2O = alpha-D-glucose + beta-D-glucose. It functions in the pathway glycan degradation; trehalose degradation; D-glucose from alpha,alpha-trehalose: step 1/1. Functionally, hydrolyzes trehalose to glucose. Could be involved, in cells returning to low osmolarity conditions, in the utilization of the accumulated cytoplasmic trehalose, which was synthesized in response to high osmolarity. The polypeptide is Cytoplasmic trehalase (Escherichia coli (strain 55989 / EAEC)).